The primary structure comprises 92 residues: Small ribosomal subunit protein uS19c (92 aa).

Belongs to the universal ribosomal protein uS19 family.

It localises to the plastid. It is found in the chloroplast. Functionally, protein S19 forms a complex with S13 that binds strongly to the 16S ribosomal RNA. The protein is Small ribosomal subunit protein uS19c of Cucumis sativus (Cucumber).